Reading from the N-terminus, the 228-residue chain is Small ribosomal subunit protein uS3 (228 aa).

Residues 39–107 (VREFIRERLK…PVHINIEEIR (69 aa)) form the KH type-2 domain.

It belongs to the universal ribosomal protein uS3 family. As to quaternary structure, part of the 30S ribosomal subunit. Forms a tight complex with proteins S10 and S14.

Binds the lower part of the 30S subunit head. Binds mRNA in the 70S ribosome, positioning it for translation. This chain is Small ribosomal subunit protein uS3, found in Halorhodospira halophila (strain DSM 244 / SL1) (Ectothiorhodospira halophila (strain DSM 244 / SL1)).